We begin with the raw amino-acid sequence, 118 residues long: NADH-quinone oxidoreductase subunit A (118 aa).

3 helical membrane passes run 8–28 (IGIFLVAAISFPLIPLVLAFF), 64–84 (ALAFVIFDIEVIFLYPWAVAF), and 87–107 (VGLYGLIAATIFLLMLFAGLL).

Belongs to the complex I subunit 3 family. In terms of assembly, NDH-1 is composed of 14 different subunits. Subunits NuoA, H, J, K, L, M, N constitute the membrane sector of the complex.

It localises to the cell membrane. The enzyme catalyses a quinone + NADH + 5 H(+)(in) = a quinol + NAD(+) + 4 H(+)(out). Its function is as follows. NDH-1 shuttles electrons from NADH, via FMN and iron-sulfur (Fe-S) centers, to quinones in the respiratory chain. The immediate electron acceptor for the enzyme in this species is believed to be ubiquinone. Couples the redox reaction to proton translocation (for every two electrons transferred, four hydrogen ions are translocated across the cytoplasmic membrane), and thus conserves the redox energy in a proton gradient. This Chloroflexus aurantiacus (strain ATCC 29366 / DSM 635 / J-10-fl) protein is NADH-quinone oxidoreductase subunit A.